A 298-amino-acid polypeptide reads, in one-letter code: Protease HtpX homolog (298 aa).

2 consecutive transmembrane segments (helical) span residues Val-14–Leu-34 and Tyr-39–Phe-59. His-143 contributes to the Zn(2+) binding site. Residue Glu-144 is part of the active site. Residue His-147 coordinates Zn(2+). 2 helical membrane-spanning segments follow: residues Ile-158 to Trp-178 and Ile-197 to Ile-217. Glu-226 is a binding site for Zn(2+).

Belongs to the peptidase M48B family. Zn(2+) serves as cofactor.

The protein resides in the cell membrane. This Streptococcus pyogenes serotype M49 (strain NZ131) protein is Protease HtpX homolog.